Here is a 314-residue protein sequence, read N- to C-terminus: Olfactory receptor 9I1 (314 aa).

Topologically, residues 1–25 (MAKNNLTRVTEFILMGFMDHPKLEI) are extracellular. N-linked (GlcNAc...) asparagine glycosylation occurs at asparagine 5. The helical transmembrane segment at 26 to 46 (PLFLVFLSFYLVTLLGNVGMI) threads the bilayer. The Cytoplasmic portion of the chain corresponds to 47–54 (MLIQVDVK). Residues 55 to 75 (LYTPMYFFLSHLSLLDACYTS) form a helical membrane-spanning segment. The Extracellular segment spans residues 76–99 (VITPQILATLATGKTVISYGHCAA). Cysteines 97 and 189 form a disulfide. Residues 100–120 (QFFLFTICAGTECFLLAVMAY) form a helical membrane-spanning segment. The Cytoplasmic portion of the chain corresponds to 121–139 (DRYAAIRNPLLYTVAMNPR). A helical membrane pass occupies residues 140–160 (LCWSLVVGAYVCGVSGAILRT). The Extracellular portion of the chain corresponds to 161–197 (TCTFTLSFCKDNQINFFFCDLPPLLKLACSDTANIEI). Residues 198–217 (VIIFFGNFVILANASVILIS) traverse the membrane as a helical segment. Over 218 to 237 (YLLIIKTILKVKSSGGRAKT) the chain is Cytoplasmic. A helical membrane pass occupies residues 238–258 (FSTCASHITAVALFFGALIFM). Residues 259–271 (YLQSGSGKSLEED) lie on the Extracellular side of the membrane. The helical transmembrane segment at 272 to 292 (KVVSVFYTVVIPMLNPLIYSL) threads the bilayer. The Cytoplasmic segment spans residues 293–314 (RNKDVKDAFRKVARRLQVSLSM).

The protein belongs to the G-protein coupled receptor 1 family.

The protein resides in the cell membrane. Odorant receptor. This chain is Olfactory receptor 9I1 (OR9I1), found in Homo sapiens (Human).